Consider the following 442-residue polypeptide: Protein PhoH2 (442 aa).

One can recognise a PINc domain in the interval 3 to 135 (KIYVLDTNVL…LVSKDVLVRV (133 aa)). Position 259–266 (259–266 (GKAGTGKT)) interacts with ATP.

The protein in the N-terminal section; belongs to the PINc/VapC protein family. It in the C-terminal section; belongs to the PhoH family.

The catalysed reaction is n ATP + n H2O + wound RNA = n ADP + n phosphate + unwound RNA.. It carries out the reaction ATP + H2O = ADP + phosphate + H(+). The enzyme catalyses GTP + H2O = GDP + phosphate + H(+). Functionally, unwinds and/or cleaves 5'-tailed RNA in vitro. Has ATPase and GTPase activities. Unlike the protein in mycobacteria there does not seem to be an antitoxin gene upstream, suggesting this is not a toxin-antitoxin system. The sequence is that of Protein PhoH2 from Bacillus subtilis (strain 168).